Reading from the N-terminus, the 334-residue chain is Holliday junction branch migration complex subunit RuvB (334 aa).

The large ATPase domain (RuvB-L) stretch occupies residues 1–179 (MTHKISVLHQ…FAFTGRVDYY (179 aa)). Residues Leu18, Arg19, Gly60, Lys63, Thr64, Ser65, 126 to 128 (EDF), Arg169, Tyr179, and Arg216 each bind ATP. Mg(2+) is bound at residue Thr64. A small ATPAse domain (RuvB-S) region spans residues 180–250 (TDEDLVSILS…VAEKALAMLL (71 aa)). The head domain (RuvB-H) stretch occupies residues 253 to 334 (NLGLNEIDIK…RNPKDRWGEE (82 aa)). DNA-binding residues include Arg308 and Arg313.

This sequence belongs to the RuvB family. Homohexamer. Forms an RuvA(8)-RuvB(12)-Holliday junction (HJ) complex. HJ DNA is sandwiched between 2 RuvA tetramers; dsDNA enters through RuvA and exits via RuvB. An RuvB hexamer assembles on each DNA strand where it exits the tetramer. Each RuvB hexamer is contacted by two RuvA subunits (via domain III) on 2 adjacent RuvB subunits; this complex drives branch migration. In the full resolvosome a probable DNA-RuvA(4)-RuvB(12)-RuvC(2) complex forms which resolves the HJ.

The protein localises to the cytoplasm. The catalysed reaction is ATP + H2O = ADP + phosphate + H(+). The RuvA-RuvB-RuvC complex processes Holliday junction (HJ) DNA during genetic recombination and DNA repair, while the RuvA-RuvB complex plays an important role in the rescue of blocked DNA replication forks via replication fork reversal (RFR). RuvA specifically binds to HJ cruciform DNA, conferring on it an open structure. The RuvB hexamer acts as an ATP-dependent pump, pulling dsDNA into and through the RuvAB complex. RuvB forms 2 homohexamers on either side of HJ DNA bound by 1 or 2 RuvA tetramers; 4 subunits per hexamer contact DNA at a time. Coordinated motions by a converter formed by DNA-disengaged RuvB subunits stimulates ATP hydrolysis and nucleotide exchange. Immobilization of the converter enables RuvB to convert the ATP-contained energy into a lever motion, pulling 2 nucleotides of DNA out of the RuvA tetramer per ATP hydrolyzed, thus driving DNA branch migration. The RuvB motors rotate together with the DNA substrate, which together with the progressing nucleotide cycle form the mechanistic basis for DNA recombination by continuous HJ branch migration. Branch migration allows RuvC to scan DNA until it finds its consensus sequence, where it cleaves and resolves cruciform DNA. The sequence is that of Holliday junction branch migration complex subunit RuvB from Chlamydia trachomatis serovar A (strain ATCC VR-571B / DSM 19440 / HAR-13).